A 359-amino-acid chain; its full sequence is Holliday junction branch migration complex subunit RuvB (359 aa).

The tract at residues 1–22 (MAIVSSNAEPSKGAPRPKPSRV) is disordered. A large ATPase domain (RuvB-L) region spans residues 13 to 204 (GAPRPKPSRV…FGLIQRLEFY (192 aa)). 9 residues coordinate ATP: Leu-43, Arg-44, Gly-85, Lys-88, Thr-89, Thr-90, Arg-194, Tyr-204, and Arg-241. Position 89 (Thr-89) interacts with Mg(2+). Residues 205 to 276 (GQEDLQAIVM…LVDEALTLHR (72 aa)) are small ATPAse domain (RuvB-S). A head domain (RuvB-H) region spans residues 279–359 (GKGLDASDRR…GWPADEGDAA (81 aa)). Residues Arg-334 and Arg-339 each coordinate DNA.

This sequence belongs to the RuvB family. In terms of assembly, homohexamer. Forms an RuvA(8)-RuvB(12)-Holliday junction (HJ) complex. HJ DNA is sandwiched between 2 RuvA tetramers; dsDNA enters through RuvA and exits via RuvB. An RuvB hexamer assembles on each DNA strand where it exits the tetramer. Each RuvB hexamer is contacted by two RuvA subunits (via domain III) on 2 adjacent RuvB subunits; this complex drives branch migration. In the full resolvosome a probable DNA-RuvA(4)-RuvB(12)-RuvC(2) complex forms which resolves the HJ.

The protein localises to the cytoplasm. The enzyme catalyses ATP + H2O = ADP + phosphate + H(+). Its function is as follows. The RuvA-RuvB-RuvC complex processes Holliday junction (HJ) DNA during genetic recombination and DNA repair, while the RuvA-RuvB complex plays an important role in the rescue of blocked DNA replication forks via replication fork reversal (RFR). RuvA specifically binds to HJ cruciform DNA, conferring on it an open structure. The RuvB hexamer acts as an ATP-dependent pump, pulling dsDNA into and through the RuvAB complex. RuvB forms 2 homohexamers on either side of HJ DNA bound by 1 or 2 RuvA tetramers; 4 subunits per hexamer contact DNA at a time. Coordinated motions by a converter formed by DNA-disengaged RuvB subunits stimulates ATP hydrolysis and nucleotide exchange. Immobilization of the converter enables RuvB to convert the ATP-contained energy into a lever motion, pulling 2 nucleotides of DNA out of the RuvA tetramer per ATP hydrolyzed, thus driving DNA branch migration. The RuvB motors rotate together with the DNA substrate, which together with the progressing nucleotide cycle form the mechanistic basis for DNA recombination by continuous HJ branch migration. Branch migration allows RuvC to scan DNA until it finds its consensus sequence, where it cleaves and resolves cruciform DNA. The chain is Holliday junction branch migration complex subunit RuvB from Synechococcus sp. (strain CC9311).